Here is a 716-residue protein sequence, read N- to C-terminus: Pyruvate/proton symporter BtsT (716 aa).

The Cytoplasmic portion of the chain corresponds to 1–5 (MDTKK). Residues 6-26 (IFKHIPWVILGIIGAFCLAVV) traverse the membrane as a helical segment. Residues 27–30 (ALRR) lie on the Periplasmic side of the membrane. The helical transmembrane segment at 31–51 (GEHISALWIVVASVSVYLVAY) threads the bilayer. Topologically, residues 52 to 88 (RYYSLYIAQKVMKLDPTRATPAVINNDGLNYVPTNRY) are cytoplasmic. The helical transmembrane segment at 89–109 (VLFGHHFAAIAGAGPLVGPVL) threads the bilayer. Topologically, residues 110–119 (AAQMGYLPGT) are periplasmic. A helical transmembrane segment spans residues 120 to 140 (LWLLAGVVLAGAVQDFMVLFI). The Cytoplasmic portion of the chain corresponds to 141–163 (SSRRNGASLGEMIKEEMGPVPGT). The chain crosses the membrane as a helical span at residues 164–184 (IALFGCFLIMIIILAVLALIV). The Periplasmic portion of the chain corresponds to 185 to 191 (VKALAES). The helical transmembrane segment at 192–212 (PWGVFTVCSTVPIALFMGIYM) threads the bilayer. Topologically, residues 213–222 (RFIRPGRVGE) are cytoplasmic. The helical transmembrane segment at 223–243 (VSVIGIVLLVASIYFGGVIAH) threads the bilayer. Residues 244-257 (DPYWGPALTFKDTT) lie on the Periplasmic side of the membrane. A helical transmembrane segment spans residues 258 to 278 (ITFALIGYAFVSALLPVWLIL). Over 279–282 (APRD) the chain is Cytoplasmic. Residues 283–303 (YLATFLKIGVIVGLALGIVVL) traverse the membrane as a helical segment. At 304–326 (NPELKMPAMTQYIDGTGPLWKGA) the chain is on the periplasmic side. A helical membrane pass occupies residues 327–347 (LFPFLFITIACGAVSGFHALI). The Cytoplasmic portion of the chain corresponds to 348–374 (SSGTTPKLLANETDARFIGYGAMLMES). A helical transmembrane segment spans residues 375–395 (FVAIMALVAASIIEPGLYFAM). Residues 396–484 (NTPPAGLGIT…HVFHKVLPMA (89 aa)) lie on the Periplasmic side of the membrane. Residues 485-505 (DMGFWYHFGILFEALFILTAL) traverse the membrane as a helical segment. At 506 to 531 (DAGTRSGRFMLQDLLGNFIPFLKKTD) the chain is on the cytoplasmic side. A helical transmembrane segment spans residues 532–552 (SLVAGIIGTAGCVGLWGYLLY). Residues 553-568 (QGVVDPLGGVKSLWPL) are Periplasmic-facing. A helical transmembrane segment spans residues 569–589 (FGISNQMLAAVALVLGTVVLI). The Cytoplasmic portion of the chain corresponds to 590–596 (KMKRTQY). Residues 597-617 (IWVTVVPAVWLLICTTWALGL) traverse the membrane as a helical segment. The Periplasmic portion of the chain corresponds to 618 to 668 (KLFSTNPQMEGFFYMASQYKEKIANGTDLTAQQIANMNHIVVNNYTNAGLS). The helical transmembrane segment at 669-689 (ILFLIVVYSIIFYGFKTWLAV) threads the bilayer. At 690-716 (RNSDKRTDKETPYVPIPEGGVKISSHH) the chain is on the cytoplasmic side. A disordered region spans residues 696-716 (TDKETPYVPIPEGGVKISSHH).

This sequence belongs to the peptide transporter carbon starvation (CstA) (TC 2.A.114) family. Interacts with BtsS and YpdA.

The protein localises to the cell inner membrane. The catalysed reaction is pyruvate(out) + H(+)(out) = pyruvate(in) + H(+)(in). Transport is inhibited by the protonophores 2,4-dinitrophenol (DNP) and carbonyl cyanide m-chlorophenyl hydrazone (CCCP), but not by ionophores such as valinomycin, nonactin and nigericin. Functionally, transports pyruvate with a high affinity and specificity. The process is driven by the proton motive force. Under nutrient limiting conditions, mediates the uptake of pyruvate, thus enabling it to be used as a carbon source for the growth and survival. Part of a nutrient-sensing regulatory network composed of the two-component regulatory systems BtsS/BtsR and YpdA/YpdB, and their respective target proteins, BtsT and YhjX. This Escherichia coli (strain K12) protein is Pyruvate/proton symporter BtsT.